A 529-amino-acid chain; its full sequence is DNA polymerase lambda (529 aa).

One can recognise a BRCT domain in the interval 14–109; that stretch reads DPEGMFAGMV…EKANEDLYVL (96 aa). The interval 119–199 is disordered; that stretch reads PKKSLPAISG…ESTSVYKPPD (81 aa). Polar residues predominate over residues 153–175; sequence SHSNTQGSPDSPTSCSVPSTSAS. The span at 182–193 shows a compositional bias: low complexity; that stretch reads ETPTSPQSESTS. Residues 213–227 are DNA-binding; the sequence is NIYRALGEDRRSFSY. H260 is a catalytic residue. Residues 295-298 form a DNA-binding region; that stretch reads GPAT. DCTP-binding positions include R336, 367–370, and 376–379; these read SYRR and GDLD. Residues 370 to 379 form an involved in primer binding region; the sequence is RGKATCGDLD. Residues D377, D379, and D444 each coordinate Mn(2+). The interval 418–459 is DNA-binding; sequence EEGTDSGVDTYFGLCTYPGQELRRRIDFKVYPRDIYSFGLIA. Position 467 (N467) interacts with dCTP.

The protein belongs to the DNA polymerase type-X family. As to quaternary structure, interacts with the DNA repair proteins XRCC4 and LIG4. Interacts with HSP90-1. Mn(2+) is required as a cofactor.

Its subcellular location is the nucleus. The catalysed reaction is DNA(n) + a 2'-deoxyribonucleoside 5'-triphosphate = DNA(n+1) + diphosphate. Its function is as follows. Repair polymerase involved in base excision repair (BER) and responsible for repair of lesions that give rise to abasic (AP) sites in DNA. Has both DNA polymerase and terminal transferase activities. Has a 5'-deoxyribose-5-phosphate lyase (dRP lyase) activity. Involved in the repair of transposon-induced DNA double strand breaks (DSBs). Involved in repair of UV-B-mediated DNA damage during seedling development through an excision repair mechanism. Involved the repair of DSBs induced by high salinity and DNA cross-linking agent. Functions via the DNA non-homologous end joining (NHEJ) pathway. The chain is DNA polymerase lambda from Arabidopsis thaliana (Mouse-ear cress).